The following is a 92-amino-acid chain: Subtilisin inhibitor 1 (92 aa).

Residues 1–12 (QEQGTNPSQEQN) show a composition bias toward polar residues. The tract at residues 1–31 (QEQGTNPSQEQNVPLPRNYKQALETNTPTKT) is disordered.

This sequence belongs to the protease inhibitor I13 (potato type I serine protease inhibitor) family.

Functionally, inhibitor of subtilisin. The polypeptide is Subtilisin inhibitor 1 (Phaseolus angularis (Azuki bean)).